A 1482-amino-acid polypeptide reads, in one-letter code: Chromosome partition protein MukB (1482 aa).

34 to 41 serves as a coordination point for ATP; it reads GGNGAGKS. 5 coiled-coil regions span residues 326-472, 507-602, 780-805, 832-1110, and 1209-1265; these read LEAD…QTAH, NQRH…RRAP, RAAR…ATLS, DDPE…REQV, and VEAI…LQSV. The flexible hinge stretch occupies residues 666 to 783; that stretch reads PGGSEDPRLN…SLPLFGRAAR (118 aa).

This sequence belongs to the SMC family. MukB subfamily. In terms of assembly, homodimerization via its hinge domain. Binds to DNA via its C-terminal region. Interacts, and probably forms a ternary complex, with MukE and MukF via its C-terminal region. The complex formation is stimulated by calcium or magnesium. Interacts with tubulin-related protein FtsZ.

It localises to the cytoplasm. The protein localises to the nucleoid. In terms of biological role, plays a central role in chromosome condensation, segregation and cell cycle progression. Functions as a homodimer, which is essential for chromosome partition. Involved in negative DNA supercoiling in vivo, and by this means organize and compact chromosomes. May achieve or facilitate chromosome segregation by condensation DNA from both sides of a centrally located replisome during cell division. This is Chromosome partition protein MukB from Klebsiella pneumoniae subsp. pneumoniae (strain ATCC 700721 / MGH 78578).